The sequence spans 148 residues: Putative adenylate kinase (148 aa).

ATP-binding residues include Gly-9, Gly-11, Lys-12, Ser-13, and Thr-14. The NMP stretch occupies residues 28–44; sequence EGNALAVKYGCLSGDEV. An LID region spans residues 91-101; it reads DRGYSPEKIDE. Arg-92 contributes to the ATP binding site.

This sequence belongs to the adenylate kinase family. AK6 subfamily. Interacts with uS11. Not a structural component of 40S pre-ribosomes, but transiently interacts with them by binding to uS11.

The catalysed reaction is AMP + ATP = 2 ADP. The enzyme catalyses ATP + H2O = ADP + phosphate + H(+). Broad-specificity nucleoside monophosphate (NMP) kinase that catalyzes the reversible transfer of the terminal phosphate group between nucleoside triphosphates and monophosphates. Also has ATPase activity. Involved in the late maturation steps of the 30S ribosomal particles, specifically 16S rRNA maturation. While NMP activity is not required for ribosome maturation, ATPase activity is. Associates transiently with small ribosomal subunit protein uS11. ATP hydrolysis breaks the interaction with uS11. May temporarily remove uS11 from the ribosome to enable a conformational change of the ribosomal RNA that is needed for the final maturation step of the small ribosomal subunit. The protein is Putative adenylate kinase of Thermoplasma acidophilum (strain ATCC 25905 / DSM 1728 / JCM 9062 / NBRC 15155 / AMRC-C165).